The primary structure comprises 538 residues: ESX-3 secretion system ATPase EccB3 (538 aa).

The span at 1-16 shows a compositional bias: basic and acidic residues; sequence MTNQQHDHDFDHDRRS. Residues 1-25 are disordered; the sequence is MTNQQHDHDFDHDRRSFASRTPVNN. The chain crosses the membrane as a helical span at residues 75-95; that stretch reads VLMGVLIVITGLIGSFVFSLI.

It belongs to the EccB family. Part of the ESX-3 / type VII secretion system (T7SS), which is composed of cytosolic and membrane components. The ESX-3 membrane complex is composed of EccB3, EccC3, EccD3 and EccE3.

Its subcellular location is the cell inner membrane. Functionally, an ATPase. Part of the ESX-3 specialized secretion system, which is important for iron and zinc uptake or homeostasis. In Mycobacterium tuberculosis (strain CDC 1551 / Oshkosh), this protein is ESX-3 secretion system ATPase EccB3.